A 295-amino-acid chain; its full sequence is 33 kDa chaperonin (295 aa).

2 disulfides stabilise this stretch: Cys236–Cys238 and Cys269–Cys272.

This sequence belongs to the HSP33 family. In terms of processing, under oxidizing conditions two disulfide bonds are formed involving the reactive cysteines. Under reducing conditions zinc is bound to the reactive cysteines and the protein is inactive.

Its subcellular location is the cytoplasm. Its function is as follows. Redox regulated molecular chaperone. Protects both thermally unfolding and oxidatively damaged proteins from irreversible aggregation. Plays an important role in the bacterial defense system toward oxidative stress. The protein is 33 kDa chaperonin of Geobacter sp. (strain M21).